Here is a 1002-residue protein sequence, read N- to C-terminus: BLOC-2 complex member HPS3 (1002 aa).

Residues 218-239 (GESVDHHPQETSNPLKEAEGVS) form a disordered region.

In terms of assembly, component of the biogenesis of lysosome-related organelles complex-2 (or BLOC2) composed of HPS3, HPS5 and HPS6. Interacts with HPS5 and HPS6. As to expression, found in heart, brain, spleen, liver, lung, kidney and testis.

The protein localises to the cytoplasm. It is found in the cytosol. Involved in early stages of melanosome biogenesis and maturation. The chain is BLOC-2 complex member HPS3 (Hps3) from Mus musculus (Mouse).